A 535-amino-acid chain; its full sequence is MRLAFWLYEGTALHGISRITNSMKGVHTVYHAPQGDDYITATYSMLERTPDFPGLSISVVRGRDLAQGVSRLPGTLQQVAHHYSPDLTVIAPSCSTALLQEDLHQLAAHSGVPEEKLLVYALNPFRVSENEAADGLFFELVKRFAVAQEKTPRPSVNLLGFTSLGFHLRANLTSLRRMLQTLGVSVNVVAPWGAGIEDLRKLPAAWLNIAPYREIGETAAGYLGETFGMPAIHEAPIGVEPTLAWLRSVIEKINAVGVEQGVPPIGMPKLNAFSLDGMSAPSGVPWFARTADMESFSNKRAFVFGDATHTVSIVKFLRDELGMKIIGAGTYMHRHADFVRRELEGYLSGELLVTDKFQDVSKVIEDEMPDLVCGTQMERHSCRKLDVPCMVICPPTHIENHLLGYYPFFGFDGADVIADRVYLSCKLGLEKHLIDFFGDAGLEYEDEASPSESAPHASNGHEDVAGGSTAQSVPSHAATEGDGMSWTDEAENMLKKVPFFVRKKVRKNTENFAREQGETTVTADVFRQAKESLGG.

Asp-36 provides a ligand contact to [4Fe-4S] cluster. Asp-292 acts as the Proton donor in catalysis. 428 to 429 (GL) serves as a coordination point for substrate. Positions 446–483 (DEASPSESAPHASNGHEDVAGGSTAQSVPSHAATEGDG) are disordered.

This sequence belongs to the ChlB/BchB/BchZ family. As to quaternary structure, protochlorophyllide reductase is composed of three subunits; BchL, BchN and BchB. Forms a heterotetramer of two BchB and two BchN subunits. [4Fe-4S] cluster is required as a cofactor.

It carries out the reaction chlorophyllide a + oxidized 2[4Fe-4S]-[ferredoxin] + 2 ADP + 2 phosphate = protochlorophyllide a + reduced 2[4Fe-4S]-[ferredoxin] + 2 ATP + 2 H2O. Its pathway is porphyrin-containing compound metabolism; bacteriochlorophyll biosynthesis (light-independent). Component of the dark-operative protochlorophyllide reductase (DPOR) that uses Mg-ATP and reduced ferredoxin to reduce ring D of protochlorophyllide (Pchlide) to form chlorophyllide a (Chlide). This reaction is light-independent. The NB-protein (BchN-BchB) is the catalytic component of the complex. In Chlorobium limicola (strain DSM 245 / NBRC 103803 / 6330), this protein is Light-independent protochlorophyllide reductase subunit B.